We begin with the raw amino-acid sequence, 339 residues long: Anthranilate phosphoribosyltransferase (339 aa).

Residues glycine 79, 82–83 (GD), serine 87, 89–92 (NIST), 107–115 (KHGNRSISS), and serine 119 contribute to the 5-phospho-alpha-D-ribose 1-diphosphate site. Residue glycine 79 coordinates anthranilate. Serine 91 provides a ligand contact to Mg(2+). An anthranilate-binding site is contributed by asparagine 110. Anthranilate is bound at residue arginine 165. The Mg(2+) site is built by aspartate 224 and glutamate 225.

This sequence belongs to the anthranilate phosphoribosyltransferase family. In terms of assembly, homodimer. Requires Mg(2+) as cofactor.

The catalysed reaction is N-(5-phospho-beta-D-ribosyl)anthranilate + diphosphate = 5-phospho-alpha-D-ribose 1-diphosphate + anthranilate. It functions in the pathway amino-acid biosynthesis; L-tryptophan biosynthesis; L-tryptophan from chorismate: step 2/5. Functionally, catalyzes the transfer of the phosphoribosyl group of 5-phosphorylribose-1-pyrophosphate (PRPP) to anthranilate to yield N-(5'-phosphoribosyl)-anthranilate (PRA). This is Anthranilate phosphoribosyltransferase from Listeria monocytogenes serotype 4a (strain HCC23).